Consider the following 81-residue polypeptide: MSHSVKIYDTCIGCTQCVRACPTDVLEMIPWDGCKAKQIAPAPRTEDCVGCKRCESACPTDFLSVRVYLSNETTRSMGLAY.

4Fe-4S ferredoxin-type domains follow at residues 2–31 and 39–68; these read SHSVKIYDTCIGCTQCVRACPTDVLEMIPW and IAPAPRTEDCVGCKRCESACPTDFLSVRVY. [4Fe-4S] cluster is bound by residues C11, C14, C17, C21, C48, C51, C54, and C58.

In terms of assembly, the eukaryotic PSI reaction center is composed of at least 11 subunits. The cofactor is [4Fe-4S] cluster.

The protein localises to the plastid. It localises to the chloroplast thylakoid membrane. The catalysed reaction is reduced [plastocyanin] + hnu + oxidized [2Fe-2S]-[ferredoxin] = oxidized [plastocyanin] + reduced [2Fe-2S]-[ferredoxin]. In terms of biological role, apoprotein for the two 4Fe-4S centers FA and FB of photosystem I (PSI); essential for photochemical activity. FB is the terminal electron acceptor of PSI, donating electrons to ferredoxin. The C-terminus interacts with PsaA/B/D and helps assemble the protein into the PSI complex. Required for binding of PsaD and PsaE to PSI. PSI is a plastocyanin-ferredoxin oxidoreductase, converting photonic excitation into a charge separation, which transfers an electron from the donor P700 chlorophyll pair to the spectroscopically characterized acceptors A0, A1, FX, FA and FB in turn. In Chloranthus spicatus (Chulantree), this protein is Photosystem I iron-sulfur center.